The chain runs to 330 residues: Ketol-acid reductoisomerase (NADP(+)) (330 aa).

The KARI N-terminal Rossmann domain occupies methionine 1–threonine 181. Residues phenylalanine 24–glutamine 27, arginine 47, serine 50, serine 52, and aspartate 82–glutamine 85 each bind NADP(+). Histidine 107 is a catalytic residue. Glycine 133 lines the NADP(+) pocket. One can recognise a KARI C-terminal knotted domain in the interval threonine 182–leucine 327. Aspartate 190, glutamate 194, glutamate 226, and glutamate 230 together coordinate Mg(2+). Serine 251 is a binding site for substrate.

The protein belongs to the ketol-acid reductoisomerase family. The cofactor is Mg(2+).

It carries out the reaction (2R)-2,3-dihydroxy-3-methylbutanoate + NADP(+) = (2S)-2-acetolactate + NADPH + H(+). It catalyses the reaction (2R,3R)-2,3-dihydroxy-3-methylpentanoate + NADP(+) = (S)-2-ethyl-2-hydroxy-3-oxobutanoate + NADPH + H(+). Its pathway is amino-acid biosynthesis; L-isoleucine biosynthesis; L-isoleucine from 2-oxobutanoate: step 2/4. It functions in the pathway amino-acid biosynthesis; L-valine biosynthesis; L-valine from pyruvate: step 2/4. In terms of biological role, involved in the biosynthesis of branched-chain amino acids (BCAA). Catalyzes an alkyl-migration followed by a ketol-acid reduction of (S)-2-acetolactate (S2AL) to yield (R)-2,3-dihydroxy-isovalerate. In the isomerase reaction, S2AL is rearranged via a Mg-dependent methyl migration to produce 3-hydroxy-3-methyl-2-ketobutyrate (HMKB). In the reductase reaction, this 2-ketoacid undergoes a metal-dependent reduction by NADPH to yield (R)-2,3-dihydroxy-isovalerate. The protein is Ketol-acid reductoisomerase (NADP(+)) of Chlorobium phaeobacteroides (strain BS1).